We begin with the raw amino-acid sequence, 421 residues long: MAATLILEPAGRCCWDEPVRIAVRGLAPEQPVTLRASLRDEKGALFQAHARYRADTLGELDLERAPALGGSFAGLEPMGLLWALEPEKPLVRLVKRDVRTPLAVELEVLDGHDPDPGRLLCRVRHERYFLPPGVRREPVRAGRVRGTLFLPPEPGPFPGIVDMFGTGGGLLEYRASLLAGKGFAVMALAYYNYEDLPKTMETLHLEYFEEAVNYLLSHPEVKGPGVGLLGISKGGELCLSMASFLKGITAAVVINGSVANVGGTLRYKGETLPPVGVNRNRIKVTKDGYADIVDVLNSPLEGPDQKSFIPVERAESTFLFLVGQDDHNWKSEFYANEACKRLQAHGRRKPQIICYPETGHYIEPPYFPLCRASLHALVGSPIIWGGEPRAHAMAQVDAWKQLQTFFHKHLGGHEGTIPSKV.

Residues Ser232, Asp326, and His360 each act as charge relay system in the active site.

It belongs to the C/M/P thioester hydrolase family. Monomer.

It localises to the cytoplasm. The protein resides in the cytosol. The enzyme catalyses hexadecanoyl-CoA + H2O = hexadecanoate + CoA + H(+). The catalysed reaction is decanoyl-CoA + H2O = decanoate + CoA + H(+). It catalyses the reaction dodecanoyl-CoA + H2O = dodecanoate + CoA + H(+). It carries out the reaction tetradecanoyl-CoA + H2O = tetradecanoate + CoA + H(+). The enzyme catalyses octadecanoyl-CoA + H2O = octadecanoate + CoA + H(+). The catalysed reaction is eicosanoyl-CoA + H2O = eicosanoate + CoA + H(+). It catalyses the reaction (9Z)-octadecenoyl-CoA + H2O = (9Z)-octadecenoate + CoA + H(+). It carries out the reaction (9Z)-hexadecenoyl-CoA + H2O = (9Z)-hexadecenoate + CoA + H(+). The enzyme catalyses (9E)-octadecenoyl-CoA + H2O = (9E)-octadecenoate + CoA + H(+). Its pathway is lipid metabolism; fatty acid metabolism. Its function is as follows. Catalyzes the hydrolysis of acyl-CoAs into free fatty acids and coenzyme A (CoASH), regulating their respective intracellular levels. More active towards saturated and unsaturated long chain fatty acyl-CoAs (C12-C20). The protein is Acyl-coenzyme A thioesterase 1 (ACOT1) of Homo sapiens (Human).